We begin with the raw amino-acid sequence, 617 residues long: Probable Xaa-Pro aminopeptidase P (617 aa).

The Mn(2+) site is built by aspartate 414, aspartate 425, glutamate 523, and glutamate 537.

The protein belongs to the peptidase M24B family. It depends on Mn(2+) as a cofactor.

The enzyme catalyses Release of any N-terminal amino acid, including proline, that is linked to proline, even from a dipeptide or tripeptide.. Functionally, catalyzes the removal of a penultimate prolyl residue from the N-termini of peptides. This chain is Probable Xaa-Pro aminopeptidase P (AMPP), found in Ajellomyces capsulatus (strain G186AR / H82 / ATCC MYA-2454 / RMSCC 2432) (Darling's disease fungus).